The primary structure comprises 127 residues: MSLLKEFKEFAMRGNVMDLAVAVVMGVAFNKIVTALVDGIIMPCVGLLLGGVNIAGLSFTVGDAQIKWGNFLQNVIDFIIVAFAIFVLIKLINLLQRKKANEPEPVTSEIQLLTEIRDLLARNSSKI.

3 consecutive transmembrane segments (helical) span residues 9–29 (EFAMRGNVMDLAVAVVMGVAF), 32–52 (IVTALVDGIIMPCVGLLLGGV), and 75–95 (VIDFIIVAFAIFVLIKLINLL).

This sequence belongs to the MscL family. In terms of assembly, homopentamer.

It localises to the cell inner membrane. Its function is as follows. Channel that opens in response to stretch forces in the membrane lipid bilayer. May participate in the regulation of osmotic pressure changes within the cell. This chain is Large-conductance mechanosensitive channel, found in Legionella pneumophila (strain Corby).